The chain runs to 944 residues: Protein translocase subunit SecA (944 aa).

ATP is bound by residues Gln90, Gly108–Thr112, and Asp509. Residues Val533 to Ser565 are disordered.

This sequence belongs to the SecA family. As to quaternary structure, monomer and homodimer. Part of the essential Sec protein translocation apparatus which comprises SecA, SecYEG and auxiliary proteins SecDF. Other proteins may also be involved.

The protein resides in the cell inner membrane. It localises to the cellular thylakoid membrane. Its subcellular location is the cytoplasm. It catalyses the reaction ATP + H2O + cellular proteinSide 1 = ADP + phosphate + cellular proteinSide 2.. Its function is as follows. Part of the Sec protein translocase complex. Interacts with the SecYEG preprotein conducting channel. Has a central role in coupling the hydrolysis of ATP to the transfer of proteins into and across the cell membrane, serving as an ATP-driven molecular motor driving the stepwise translocation of polypeptide chains across the membrane. Functionally, probably participates in protein translocation into and across both the cytoplasmic and thylakoid membranes in cyanobacterial cells. The polypeptide is Protein translocase subunit SecA (Prochlorococcus marinus (strain NATL1A)).